The sequence spans 86 residues: Anti-adapter protein IraP (86 aa).

A coiled-coil region spans residues 1-36 (MKNLISELLLRLAQKEEESKELVAQVEALEIIVTAM).

The protein belongs to the IraP family. As to quaternary structure, interacts with RssB.

It localises to the cytoplasm. Inhibits RpoS proteolysis by regulating RssB activity, thereby increasing the stability of the sigma stress factor RpoS especially during phosphate starvation, but also in stationary phase and during nitrogen starvation. Its effect on RpoS stability is due to its interaction with RssB, which probably blocks the interaction of RssB with RpoS, and the consequent delivery of the RssB-RpoS complex to the ClpXP protein degradation pathway. This is Anti-adapter protein IraP from Citrobacter koseri (strain ATCC BAA-895 / CDC 4225-83 / SGSC4696).